A 613-amino-acid chain; its full sequence is Probable Xaa-Pro aminopeptidase P (613 aa).

Residues D408, D419, E517, and E531 each contribute to the Mn(2+) site.

The protein belongs to the peptidase M24B family. Mn(2+) is required as a cofactor.

The catalysed reaction is Release of any N-terminal amino acid, including proline, that is linked to proline, even from a dipeptide or tripeptide.. Catalyzes the removal of a penultimate prolyl residue from the N-termini of peptides. The chain is Probable Xaa-Pro aminopeptidase P (ampp) from Penicillium rubens (strain ATCC 28089 / DSM 1075 / NRRL 1951 / Wisconsin 54-1255) (Penicillium chrysogenum).